A 999-amino-acid polypeptide reads, in one-letter code: Lysosomal alpha-mannosidase (999 aa).

A disordered region spans residues 1-25; the sequence is MVGDARPSGVRAGGCRGAVGSRTSS. The N-terminal stretch at 1–50 is a signal peptide; the sequence is MVGDARPSGVRAGGCRGAVGSRTSSRALRPPLPPLSSLFVLFLAAPCAWA. Histidine 73 and aspartate 75 together coordinate Zn(2+). The N-linked (GlcNAc...) asparagine glycan is linked to asparagine 134. Residue aspartate 197 participates in Zn(2+) binding. Residue aspartate 197 is the Nucleophile of the active site. The cysteines at positions 269 and 274 are disulfide-linked. An N-linked (GlcNAc...) asparagine glycan is attached at asparagine 369. A Zn(2+)-binding site is contributed by histidine 448. Cysteines 495 and 503 form a disulfide. Asparagine 499 carries an N-linked (GlcNAc...) asparagine glycan. The propeptide occupies 591–621; that stretch reads SRDLVIQNEYLRARFDPNTGLLMELENLEQN. Asparagine 634, asparagine 640, asparagine 681, asparagine 755, and asparagine 919 each carry an N-linked (GlcNAc...) asparagine glycan.

This sequence belongs to the glycosyl hydrolase 38 family. Homodimer. Zn(2+) is required as a cofactor. In terms of processing, processed into 5 peptides of 35/38 kDa (A), 11/13 kDa (B) and 22 kDa (C), 38 kDa (D) and 13/15 kDa (E). The A, B and C peptides are disulfide-linked into a 67 kDa complex. Heavily glycosylated. Some sugar chains are of the high-mannose type.

It is found in the lysosome. The catalysed reaction is Hydrolysis of terminal, non-reducing alpha-D-mannose residues in alpha-D-mannosides.. Its function is as follows. Necessary for the catabolism of N-linked carbohydrates released during glycoprotein turnover. The polypeptide is Lysosomal alpha-mannosidase (MAN2B1) (Bos taurus (Bovine)).